The following is a 968-amino-acid chain: Isoleucine--tRNA ligase (968 aa).

A 'HIGH' region motif is present at residues 68–78 (PYANGALHMGH). E582 provides a ligand contact to L-isoleucyl-5'-AMP. The 'KMSKS' region signature appears at 623 to 627 (KMSKS). An ATP-binding site is contributed by K626. C936, C939, C956, and C959 together coordinate Zn(2+).

It belongs to the class-I aminoacyl-tRNA synthetase family. IleS type 1 subfamily. In terms of assembly, monomer. It depends on Zn(2+) as a cofactor.

The protein resides in the cytoplasm. The catalysed reaction is tRNA(Ile) + L-isoleucine + ATP = L-isoleucyl-tRNA(Ile) + AMP + diphosphate. In terms of biological role, catalyzes the attachment of isoleucine to tRNA(Ile). As IleRS can inadvertently accommodate and process structurally similar amino acids such as valine, to avoid such errors it has two additional distinct tRNA(Ile)-dependent editing activities. One activity is designated as 'pretransfer' editing and involves the hydrolysis of activated Val-AMP. The other activity is designated 'posttransfer' editing and involves deacylation of mischarged Val-tRNA(Ile). In Prochlorococcus marinus (strain AS9601), this protein is Isoleucine--tRNA ligase.